The chain runs to 343 residues: Glycerol-3-phosphate dehydrogenase [NAD(P)+] (343 aa).

NADPH is bound by residues Ser22, Tyr23, His43, and Lys117. 3 residues coordinate sn-glycerol 3-phosphate: Lys117, Gly146, and Thr148. NADPH is bound at residue Ala150. Positions 202, 255, 265, 266, and 267 each coordinate sn-glycerol 3-phosphate. The Proton acceptor role is filled by Lys202. An NADPH-binding site is contributed by Arg266. Residues Val290 and Glu292 each contribute to the NADPH site.

Belongs to the NAD-dependent glycerol-3-phosphate dehydrogenase family.

The protein localises to the cytoplasm. It carries out the reaction sn-glycerol 3-phosphate + NAD(+) = dihydroxyacetone phosphate + NADH + H(+). It catalyses the reaction sn-glycerol 3-phosphate + NADP(+) = dihydroxyacetone phosphate + NADPH + H(+). It functions in the pathway membrane lipid metabolism; glycerophospholipid metabolism. Its function is as follows. Catalyzes the reduction of the glycolytic intermediate dihydroxyacetone phosphate (DHAP) to sn-glycerol 3-phosphate (G3P), the key precursor for phospholipid synthesis. The sequence is that of Glycerol-3-phosphate dehydrogenase [NAD(P)+] from Aliivibrio fischeri (strain ATCC 700601 / ES114) (Vibrio fischeri).